Reading from the N-terminus, the 48-residue chain is MNFGNKIKCSICKKKIFLREKNLFFPFCSKKCKIIDLYQWISGKYKLF.

Zn(2+) is bound by residues C9, C12, C28, and C32.

Belongs to the DNA gyrase inhibitor YacG family. As to quaternary structure, interacts with GyrB. Zn(2+) serves as cofactor.

In terms of biological role, inhibits all the catalytic activities of DNA gyrase by preventing its interaction with DNA. Acts by binding directly to the C-terminal domain of GyrB, which probably disrupts DNA binding by the gyrase. In Wigglesworthia glossinidia brevipalpis, this protein is DNA gyrase inhibitor YacG.